Reading from the N-terminus, the 173-residue chain is Photosystem I assembly protein Ycf3 (173 aa).

TPR repeat units follow at residues 36–69 (AFAYYRDGMAAQSEGEYAEALENYREALALEQDD), 73–106 (SYILYNMGLIYQSNGELDKALEYYHQALELNPRL), and 121–154 (GEQSLQAGDEETAEALFDEAAQYWIRAIRIAPNN).

The protein belongs to the Ycf3 family.

It is found in the cellular thylakoid membrane. Functionally, essential for the assembly of the photosystem I (PSI) complex. May act as a chaperone-like factor to guide the assembly of the PSI subunits. This is Photosystem I assembly protein Ycf3 from Synechococcus sp. (strain JA-3-3Ab) (Cyanobacteria bacterium Yellowstone A-Prime).